Reading from the N-terminus, the 254-residue chain is Triosephosphate isomerase (254 aa).

10–12 (NWK) contributes to the substrate binding site. Residue His99 is the Electrophile of the active site. The active-site Proton acceptor is the Glu169. Substrate contacts are provided by residues Gly175, Ser215, and 236 to 237 (GG).

The protein belongs to the triosephosphate isomerase family. As to quaternary structure, homodimer.

Its subcellular location is the cytoplasm. It carries out the reaction D-glyceraldehyde 3-phosphate = dihydroxyacetone phosphate. Its pathway is carbohydrate biosynthesis; gluconeogenesis. It functions in the pathway carbohydrate degradation; glycolysis; D-glyceraldehyde 3-phosphate from glycerone phosphate: step 1/1. Involved in the gluconeogenesis. Catalyzes stereospecifically the conversion of dihydroxyacetone phosphate (DHAP) to D-glyceraldehyde-3-phosphate (G3P). The sequence is that of Triosephosphate isomerase from Chlamydia caviae (strain ATCC VR-813 / DSM 19441 / 03DC25 / GPIC) (Chlamydophila caviae).